The sequence spans 401 residues: LysM domain-containing GPI-anchored protein LYP4 (401 aa).

The signal sequence occupies residues 1–23 (MPPPLLLLLLLAAAAAAVAPARS). Disulfide bonds link cysteine 30–cysteine 96, cysteine 36–cysteine 162, cysteine 94–cysteine 160, and cysteine 96–cysteine 162. LysM domains lie at 106–156 (VRYV…TLFV) and 175–218 (LTYV…IIVV). 2 disulfides stabilise this stretch: cysteine 223–cysteine 255 and cysteine 250–cysteine 279. Asparagine 240 carries N-linked (GlcNAc...) asparagine glycosylation. N-linked (GlcNAc...) asparagine glycans are attached at residues asparagine 281, asparagine 288, and asparagine 310. A lipid anchor (GPI-anchor amidated serine) is attached at serine 373. Positions 374–401 (SGPPPAGRHVVGDVLGAFALCLVGNLLW) are cleaved as a propeptide — removed in mature form.

In terms of assembly, interacts with LYP6. Interacts with CEBIP. Interacts with CERK1. In terms of tissue distribution, expressed in roots and leaves.

The protein resides in the cell membrane. In terms of biological role, functions in innate immunity. Functions as a pattern recognition receptor (PRR), sensing bacterial peptidoglycan (PGN) and fungal chitin at the cell surface. Involved in resistance against the bacterial pathogen Xanthomonas oryzae pv. oryzae (Xoo) and the fungal pathogen Magnaporthe oryzae. Binds PGN and fungal chitin in vitro. Involved in microbe-associated molecular patterns (MAMPs) perception and participates in the activation of defense genes against the bacterial pathogen Xanthomonas oryzae pv. oryzicola (Xoc) or the fungal pathogen Magnaporthe oryzae. This chain is LysM domain-containing GPI-anchored protein LYP4, found in Oryza sativa subsp. japonica (Rice).